A 762-amino-acid polypeptide reads, in one-letter code: 5-methyltetrahydropteroyltriglutamate--homocysteine methyltransferase (762 aa).

Residues 17–20 and Lys-111 contribute to the 5-methyltetrahydropteroyltri-L-glutamate site; that span reads REWK. Residues 435-437 and Glu-488 contribute to the L-homocysteine site; that span reads IGS. Residues 435-437 and Glu-488 each bind L-methionine; that span reads IGS. 5-methyltetrahydropteroyltri-L-glutamate-binding positions include 519 to 520 and Trp-565; that span reads RC. An L-homocysteine-binding site is contributed by Asp-603. Residue Asp-603 participates in L-methionine binding. Glu-609 contributes to the 5-methyltetrahydropteroyltri-L-glutamate binding site. Positions 645, 647, and 669 each coordinate Zn(2+). Catalysis depends on His-698, which acts as the Proton donor. Residue Cys-730 coordinates Zn(2+).

It belongs to the vitamin-B12 independent methionine synthase family. Zn(2+) serves as cofactor.

The catalysed reaction is 5-methyltetrahydropteroyltri-L-glutamate + L-homocysteine = tetrahydropteroyltri-L-glutamate + L-methionine. It participates in amino-acid biosynthesis; L-methionine biosynthesis via de novo pathway; L-methionine from L-homocysteine (MetE route): step 1/1. Catalyzes the transfer of a methyl group from 5-methyltetrahydrofolate to homocysteine resulting in methionine formation. The sequence is that of 5-methyltetrahydropteroyltriglutamate--homocysteine methyltransferase from Bacillus anthracis (strain CDC 684 / NRRL 3495).